Reading from the N-terminus, the 505-residue chain is MSQHVMFNAVLSSHPALFIQGEWRIGNGVSFEKQDPMSQQRLWQARAADHTDVTLACHAARAAFPAWARASLEQRATVIQQFAALLEQHKQSLARTISLETSKPYWETLTEVQAMIGKVAISLQAYQTRTGHSQTPMGDSMSVLRHRPHGVLAVFGPYNFPGHLPNGHIVPALLAGNTVVFKPSELTPWTAEETVKLWQEAGIPDGVLNLVQGGRETGEALAAQPDIDGLLFTGSAHTGYHLHRQLAGQPEKMLALEMGGNNALIVEQVKDRDAVVNLAIQSAFISAGQRCTCSRRLLVKTGAEGDAFLLRFTAVAQALRIGRWDEQPAPFMGAVISSQAAERMLAAQQHLLLLGGESLLNMTRPDSQSALLTPGIIDITNISEVPDEEYFGPLVSVIRYTDFTEALKIANQTRFGLAVGLVSEDRQQFEQLLLEARAGIVNWNKPLTGASSAAPFGGVGASGNHRPSAFYAADYCAWPMASLECEHLTLPATLSPGISFDLPKV.

234-239 (GSAHTG) contacts NAD(+). Catalysis depends on residues glutamate 257 and cysteine 291.

It belongs to the aldehyde dehydrogenase family. AstD subfamily.

It carries out the reaction N-succinyl-L-glutamate 5-semialdehyde + NAD(+) + H2O = N-succinyl-L-glutamate + NADH + 2 H(+). Its pathway is amino-acid degradation; L-arginine degradation via AST pathway; L-glutamate and succinate from L-arginine: step 4/5. Its function is as follows. Catalyzes the NAD-dependent reduction of succinylglutamate semialdehyde into succinylglutamate. The sequence is that of N-succinylglutamate 5-semialdehyde dehydrogenase from Yersinia pseudotuberculosis serotype IB (strain PB1/+).